The chain runs to 176 residues: ATP-dependent protease subunit HslV (176 aa).

Residue threonine 2 is part of the active site. Na(+) contacts are provided by glycine 157, cysteine 160, and threonine 163.

This sequence belongs to the peptidase T1B family. HslV subfamily. A double ring-shaped homohexamer of HslV is capped on each side by a ring-shaped HslU homohexamer. The assembly of the HslU/HslV complex is dependent on binding of ATP.

Its subcellular location is the cytoplasm. The catalysed reaction is ATP-dependent cleavage of peptide bonds with broad specificity.. Its activity is regulated as follows. Allosterically activated by HslU binding. Functionally, protease subunit of a proteasome-like degradation complex believed to be a general protein degrading machinery. This chain is ATP-dependent protease subunit HslV, found in Erwinia tasmaniensis (strain DSM 17950 / CFBP 7177 / CIP 109463 / NCPPB 4357 / Et1/99).